Here is a 178-residue protein sequence, read N- to C-terminus: Large ribosomal subunit protein uL6 (178 aa).

Belongs to the universal ribosomal protein uL6 family. Part of the 50S ribosomal subunit.

Its function is as follows. This protein binds to the 23S rRNA, and is important in its secondary structure. It is located near the subunit interface in the base of the L7/L12 stalk, and near the tRNA binding site of the peptidyltransferase center. This chain is Large ribosomal subunit protein uL6, found in Halobacterium salinarum (strain ATCC 700922 / JCM 11081 / NRC-1) (Halobacterium halobium).